The primary structure comprises 351 residues: uncharacterized protein (351 aa).

Residues 1 to 27 (MKNKKRVLIASSLSCAILLLSAATTQA) form the signal peptide. A disordered region spans residues 29–71 (SAHKDSQDQNKKEHVDKSQQKDKRNVTNKDKNSTVPDDIGKNG). Residues 30-60 (AHKDSQDQNKKEHVDKSQQKDKRNVTNKDKN) are compositionally biased toward basic and acidic residues.

Belongs to the aerolysin family.

This is an uncharacterized protein from Staphylococcus aureus (strain Mu50 / ATCC 700699).